Consider the following 416-residue polypeptide: Methylthioribose-1-phosphate isomerase (416 aa).

Asp-280 serves as the catalytic Proton donor.

The protein belongs to the eIF-2B alpha/beta/delta subunits family. MtnA subfamily.

It is found in the cytoplasm. It localises to the nucleus. It catalyses the reaction 5-(methylsulfanyl)-alpha-D-ribose 1-phosphate = 5-(methylsulfanyl)-D-ribulose 1-phosphate. It participates in amino-acid biosynthesis; L-methionine biosynthesis via salvage pathway; L-methionine from S-methyl-5-thio-alpha-D-ribose 1-phosphate: step 1/6. In terms of biological role, catalyzes the interconversion of methylthioribose-1-phosphate (MTR-1-P) into methylthioribulose-1-phosphate (MTRu-1-P). This chain is Methylthioribose-1-phosphate isomerase, found in Candida albicans (strain SC5314 / ATCC MYA-2876) (Yeast).